A 338-amino-acid chain; its full sequence is Probable tRNA pseudouridine synthase B (338 aa).

Aspartate 82 (nucleophile) is an active-site residue. The PUA domain occupies 250-325 (LPKVWIRDSA…IAVDVDKVFM (76 aa)).

This sequence belongs to the pseudouridine synthase TruB family. Type 2 subfamily.

It carries out the reaction uridine(55) in tRNA = pseudouridine(55) in tRNA. In terms of biological role, could be responsible for synthesis of pseudouridine from uracil-55 in the psi GC loop of transfer RNAs. In Thermococcus kodakarensis (strain ATCC BAA-918 / JCM 12380 / KOD1) (Pyrococcus kodakaraensis (strain KOD1)), this protein is Probable tRNA pseudouridine synthase B.